The chain runs to 298 residues: MSSEKPTSLNAMRATNPCETPIQLLHEFGTKTGNHPVYTLEKAEGQAHNPSFTFRLVIGDITSLGEGPSKKTPKQKAAEFALNILRGDTSKCLPVTDTLRDPKKPPNQMQENPVGSLQELAVQKGWRLPEYTVAQESGPPHKREFTITCRVETFVETGSGTSKQVAKRVAAEKLLTKFKTISTDNIPLNKLIGNKMGCTWDSMRNSSGEKISMLKRSPLSIPNTDYVKMLKDVAEELDFNLTYLDIDELSVNGQYQCLAELSTNPITVCHGTGISCGNAHNDAAHNALQYLKIMCIKK.

3 DRBM domains span residues 20–87, 112–180, and 225–293; these read TPIQ…ILRG, NPVG…KFKT, and DYVK…YLKI.

It belongs to the PRKRA family. As to quaternary structure, homodimer. Interacts with dicer1 and eif2ak2/pkr. Also able to interact with dsRNA. Associates with ribosomes. As to expression, expressed in brain, heart, kidney, liver, nerve and spleen.

The protein resides in the cytoplasm. The protein localises to the perinuclear region. Its subcellular location is the nucleus. It localises to the nucleolus. Its function is as follows. Activates eif2ak2/pkr in the absence of double-stranded RNA (dsRNA), leading to phosphorylation of eif2s1/efi2-alpha and inhibition of translation and induction of apoptosis. Required for siRNA production by dicer1 and for subsequent siRNA-mediated post-transcriptional gene silencing. Does not seem to be required for processing of pre-miRNA to miRNA by dicer1. In Xenopus laevis (African clawed frog), this protein is Interferon-inducible double-stranded RNA-dependent protein kinase activator A homolog B (prkra-b).